Reading from the N-terminus, the 395-residue chain is Isoafricanol synthase (395 aa).

Mg(2+) is bound by residues Asp95, Asn246, Ser250, and Glu254. A compositionally biased stretch (basic and acidic residues) spans 346–357 (TEAVSGGRERPW). Residues 346–395 (TEAVSGGRERPWARLTGAEDLIRAGRGAPPPPGSGPDTRQPMPSEPSQLA) are disordered.

The protein belongs to the terpene synthase family. The cofactor is Mg(2+).

The enzyme catalyses (2E,6E)-farnesyl diphosphate + H2O = (+)-isoafricanol + diphosphate. Its function is as follows. Catalyzes the cyclization of farnesyl diphosphate (FPP) to isoafricanol. The polypeptide is Isoafricanol synthase (Streptomyces malaysiensis).